We begin with the raw amino-acid sequence, 155 residues long: Large ribosomal subunit protein uL16m (155 aa).

Belongs to the universal ribosomal protein uL16 family.

It localises to the mitochondrion. In Petunia hybrida (Petunia), this protein is Large ribosomal subunit protein uL16m (RPL16).